We begin with the raw amino-acid sequence, 178 residues long: Oligoribonuclease (178 aa).

Residues 7–168 (LIWIDLEMTG…DDIRESIAEL (162 aa)) enclose the Exonuclease domain. Residue Y128 is part of the active site.

The protein belongs to the oligoribonuclease family.

Its subcellular location is the cytoplasm. Functionally, 3'-to-5' exoribonuclease specific for small oligoribonucleotides. The polypeptide is Oligoribonuclease (Francisella tularensis subsp. holarctica (strain OSU18)).